The chain runs to 308 residues: Tyramine--L-glutamate ligase (308 aa).

An ATP-grasp domain is found at 89–291 (KSLLKSENID…LAELLIKNAN (203 aa)). ATP is bound at residue 115 to 192 (TKIIESYPVK…QEFIDGENLS (78 aa)). Mg(2+) is bound by residues aspartate 252, glutamate 264, and asparagine 266. Mn(2+) contacts are provided by aspartate 252, glutamate 264, and asparagine 266.

Requires Mg(2+) as cofactor. Mn(2+) is required as a cofactor.

The enzyme catalyses tyramine + L-glutamate + ATP = gamma-L-glutamyltyramine + ADP + phosphate + H(+). It functions in the pathway cofactor biosynthesis; methanofuran biosynthesis. In terms of biological role, catalyzes the formation of an amide bond between tyramine and the gamma carboxy group of L-glutamate. The enzyme also accepts phenylethylamine in vitro. The protein is Tyramine--L-glutamate ligase (mfnD) of Methanocaldococcus jannaschii (strain ATCC 43067 / DSM 2661 / JAL-1 / JCM 10045 / NBRC 100440) (Methanococcus jannaschii).